We begin with the raw amino-acid sequence, 131 residues long: Small ribosomal subunit protein uS8 (131 aa).

It belongs to the universal ribosomal protein uS8 family. Part of the 30S ribosomal subunit. Contacts proteins S5 and S12.

One of the primary rRNA binding proteins, it binds directly to 16S rRNA central domain where it helps coordinate assembly of the platform of the 30S subunit. The chain is Small ribosomal subunit protein uS8 from Albidiferax ferrireducens (strain ATCC BAA-621 / DSM 15236 / T118) (Rhodoferax ferrireducens).